The primary structure comprises 233 residues: Putative N-acetylmannosamine-6-phosphate 2-epimerase (233 aa).

It belongs to the NanE family.

It catalyses the reaction an N-acyl-D-glucosamine 6-phosphate = an N-acyl-D-mannosamine 6-phosphate. It functions in the pathway amino-sugar metabolism; N-acetylneuraminate degradation; D-fructose 6-phosphate from N-acetylneuraminate: step 3/5. Functionally, converts N-acetylmannosamine-6-phosphate (ManNAc-6-P) to N-acetylglucosamine-6-phosphate (GlcNAc-6-P). This chain is Putative N-acetylmannosamine-6-phosphate 2-epimerase, found in Yersinia pseudotuberculosis serotype O:3 (strain YPIII).